We begin with the raw amino-acid sequence, 85 residues long: Large ribosomal subunit protein bL27 (85 aa).

Residues 1–20 are disordered; that stretch reads MAHKKAGGSTRNGRDSEAKR.

It belongs to the bacterial ribosomal protein bL27 family.

This Cronobacter sakazakii (strain ATCC BAA-894) (Enterobacter sakazakii) protein is Large ribosomal subunit protein bL27.